The sequence spans 154 residues: Transcriptional repressor NrdR (154 aa).

Residues 3–34 (CPFCRHPDSRVIDSRETDEGQAIRRRRSCPEC) fold into a zinc finger. The ATP-cone domain occupies 46 to 136 (LAVVKRSGVT…VYRSFSSADD (91 aa)).

It belongs to the NrdR family. Zn(2+) serves as cofactor.

Its function is as follows. Negatively regulates transcription of bacterial ribonucleotide reductase nrd genes and operons by binding to NrdR-boxes. The protein is Transcriptional repressor NrdR of Mycobacterium bovis (strain ATCC BAA-935 / AF2122/97).